A 172-amino-acid chain; its full sequence is MHYARIVSNLRLGYDIIHMAEYVTLTTNRKAFHNYFLEEKYEAGIMLLGTEIKSLRSGRVNMGDAYVKPQRGELWLVNAHISAYECSGHTSHEPMRERKLLMHRKEIALLMSKVKEKGLTLIPVRIYLKNDIAKVELSLGRGKKLYDKRDTVTKRDTERELEREVKYRNFRR.

It belongs to the SmpB family.

It localises to the cytoplasm. Required for rescue of stalled ribosomes mediated by trans-translation. Binds to transfer-messenger RNA (tmRNA), required for stable association of tmRNA with ribosomes. tmRNA and SmpB together mimic tRNA shape, replacing the anticodon stem-loop with SmpB. tmRNA is encoded by the ssrA gene; the 2 termini fold to resemble tRNA(Ala) and it encodes a 'tag peptide', a short internal open reading frame. During trans-translation Ala-aminoacylated tmRNA acts like a tRNA, entering the A-site of stalled ribosomes, displacing the stalled mRNA. The ribosome then switches to translate the ORF on the tmRNA; the nascent peptide is terminated with the 'tag peptide' encoded by the tmRNA and targeted for degradation. The ribosome is freed to recommence translation, which seems to be the essential function of trans-translation. This is SsrA-binding protein from Dehalococcoides mccartyi (strain CBDB1).